Here is a 187-residue protein sequence, read N- to C-terminus: Large ribosomal subunit protein uL5 (187 aa).

Belongs to the universal ribosomal protein uL5 family. In terms of assembly, part of the 50S ribosomal subunit; part of the 5S rRNA/L5/L18/L25 subcomplex. Contacts the 5S rRNA and the P site tRNA. Forms a bridge to the 30S subunit in the 70S ribosome.

In terms of biological role, this is one of the proteins that bind and probably mediate the attachment of the 5S RNA into the large ribosomal subunit, where it forms part of the central protuberance. In the 70S ribosome it contacts protein S13 of the 30S subunit (bridge B1b), connecting the 2 subunits; this bridge is implicated in subunit movement. Contacts the P site tRNA; the 5S rRNA and some of its associated proteins might help stabilize positioning of ribosome-bound tRNAs. This Mycobacterium bovis (strain ATCC BAA-935 / AF2122/97) protein is Large ribosomal subunit protein uL5.